Consider the following 257-residue polypeptide: Protein MoaE (257 aa).

6–29 (VITGGGTGIGAACARLMHPAGERV) is an NAD(+) binding site. Residues 75–96 (LMSSSAAPAGWATAPPPRPATA) are disordered. Ser132 is a substrate binding site. Tyr145 acts as the Proton acceptor in catalysis.

Belongs to the short-chain dehydrogenases/reductases (SDR) family.

In terms of biological role, might catalyze the conversion of monoamine compounds or their metabolites. The chain is Protein MoaE (moaE) from Klebsiella aerogenes (Enterobacter aerogenes).